The chain runs to 618 residues: UvrABC system protein C (618 aa).

One can recognise a GIY-YIG domain in the interval 13–92 (DKPGVYLMKN…IKKYRPKYNI (80 aa)). Residues 204–239 (LDIVENFKLNMEKAAENLEFEKAAMLRDKINIIEKI) enclose the UVR domain.

This sequence belongs to the UvrC family. In terms of assembly, interacts with UvrB in an incision complex.

Its subcellular location is the cytoplasm. In terms of biological role, the UvrABC repair system catalyzes the recognition and processing of DNA lesions. UvrC both incises the 5' and 3' sides of the lesion. The N-terminal half is responsible for the 3' incision and the C-terminal half is responsible for the 5' incision. The sequence is that of UvrABC system protein C from Clostridium botulinum (strain ATCC 19397 / Type A).